Reading from the N-terminus, the 715-residue chain is ATP-dependent DNA helicase Hel308 (715 aa).

Residues 1-29 (MKVEELRIDERIKEVLKKRGISELYPPQA) carry the Q motif motif. Residues glutamine 28 and 46-53 (IPTASGKT) each bind ATP. The Helicase ATP-binding domain maps to 33–197 (TSGILKGENA…WLNAKLIKSD (165 aa)). The DEAH box signature appears at 145–148 (DEIH). The Helicase C-terminal domain maps to 229–422 (LVYDAIKRSK…ILRGQILALI (194 aa)).

It belongs to the helicase family. Hel308 subfamily. Monomer.

It catalyses the reaction Couples ATP hydrolysis with the unwinding of duplex DNA by translocating in the 3'-5' direction.. The enzyme catalyses ATP + H2O = ADP + phosphate + H(+). Its function is as follows. DNA-dependent ATPase and 3'-5' DNA helicase that may be involved in repair of stalled replication forks. This chain is ATP-dependent DNA helicase Hel308, found in Pyrococcus horikoshii (strain ATCC 700860 / DSM 12428 / JCM 9974 / NBRC 100139 / OT-3).